The following is a 706-amino-acid chain: Vitamin B12-dependent ribonucleoside-diphosphate reductase (706 aa).

In terms of domain architecture, ATP-cone spans 21 to 109; that stretch reads AKVRRRDGTL…IYRQRRAELR (89 aa). Substrate is bound by residues Ser191, 206–207, Gly235, 389–393, and 534–538; these read GC, NPCGE, and PTGTI. Cys207 and Cys402 form a disulfide bridge. Asn389 (proton acceptor) is an active-site residue. Residue Cys391 is the Cysteine radical intermediate of the active site. Glu393 functions as the Proton acceptor in the catalytic mechanism.

The protein belongs to the ribonucleoside diphosphate reductase class-2 family. Requires adenosylcob(III)alamin as cofactor.

The catalysed reaction is a 2'-deoxyribonucleoside 5'-diphosphate + [thioredoxin]-disulfide + H2O = a ribonucleoside 5'-diphosphate + [thioredoxin]-dithiol. Provides the precursors necessary for DNA synthesis. Catalyzes the biosynthesis of deoxyribonucleotides from the corresponding ribonucleotides. This Mycobacterium tuberculosis (strain ATCC 25618 / H37Rv) protein is Vitamin B12-dependent ribonucleoside-diphosphate reductase (nrdZ).